Consider the following 286-residue polypeptide: Leukocyte cell-derived chemotaxin 1 (286 aa).

The helical transmembrane segment at 29-49 threads the bilayer; it reads LVAFIAGAALLLFGGVGAFYL. The BRICHOS domain occupies 75-157; it reads DSAEGTIVEV…FCADLPIYWH (83 aa). A disulfide bridge links C102 with C149. Residues 166-169 constitute a propeptide that is removed on maturation; the sequence is RKRR. Over residues 166–176 the composition is skewed to basic residues; that stretch reads RKRRSATRMRR. The interval 166–220 is disordered; that stretch reads RKRRSATRMRRQTSAGVNRQPARRRNSTASARDERPTGPEYNPENPYHQNQGSEG. N-linked (GlcNAc...) asparagine glycosylation occurs at N191. 4 cysteine pairs are disulfide-bonded: C234/C238, C235/C275, C245/C269, and C249/C265.

Belongs to the chondromodulin-1 family. After cleavage, the post-translationally modified ChM-I is secreted as a glycoprotein.

The protein resides in the secreted. The protein localises to the extracellular space. It is found in the extracellular matrix. Its subcellular location is the endomembrane system. Its function is as follows. Bifunctional growth regulator. May contribute to the rapid growth of cartilage and vascular invasion prior to the replacement of cartilage by bone during endochondral bone development. Plays a role as antiangiogenic factor in cardiac valves to suppress neovascularization. The sequence is that of Leukocyte cell-derived chemotaxin 1 from Danio rerio (Zebrafish).